The chain runs to 99 residues: DNA-binding protein Fis (99 aa).

A DNA-binding region (H-T-H motif) is located at residues 75–94; it reads QTRAALMLGVNRGTLRKKLK.

This sequence belongs to the transcriptional regulatory Fis family. Homodimer.

Activates ribosomal RNA transcription. Plays a direct role in upstream activation of rRNA promoters. The chain is DNA-binding protein Fis from Actinobacillus succinogenes (strain ATCC 55618 / DSM 22257 / CCUG 43843 / 130Z).